Reading from the N-terminus, the 124-residue chain is Small ribosomal subunit protein uS12c (124 aa).

The segment at 105-124 is disordered; sequence AGVKDRRQSRSKYGAKRPKA. Residues 113 to 124 are compositionally biased toward basic residues; sequence SRSKYGAKRPKA.

This sequence belongs to the universal ribosomal protein uS12 family. In terms of assembly, part of the 30S ribosomal subunit.

The protein localises to the plastid. The protein resides in the cyanelle. Functionally, with S4 and S5 plays an important role in translational accuracy. Located at the interface of the 30S and 50S subunits. This is Small ribosomal subunit protein uS12c (rps12) from Cyanophora paradoxa.